The following is a 359-amino-acid chain: Mitochondrial glutathione transporter SLC25A39 (359 aa).

Topologically, residues 1-18 (MGDRPAVRISAAITPVQQ) are mitochondrial intermembrane. Solcar repeat units follow at residues 13-149 (ITPV…LRDF), 157-241 (HGDH…VKAQ), and 251-346 (ASFT…GKTF). The chain crosses the membrane as a helical span at residues 19–39 (MLASGTGAVLTSLFVTPLDVV). The Mitochondrial matrix segment spans residues 40-119 (KIRLQAQQTP…VKITHNEGLR (80 aa)). Residues cysteine 72, cysteine 76, cysteine 86, and cysteine 92 each contribute to the [2Fe-2S] cluster site. The chain crosses the membrane as a helical span at residues 120-140 (SLWSGLPPTLVMAVPATVIYF). Over 141 to 162 (TCYDQLRDFLCYSMGYHGDHIP) the chain is Mitochondrial intermembrane. Residues 163 to 183 (LIAGGLARLGAVSVISPLELV) traverse the membrane as a helical segment. Topologically, residues 184-212 (RTKMQSRRLQYSELMVCIRSSVAQDGWLS) are mitochondrial matrix. Residues 213-233 (LWRGWGPTVLRDVPFSALYWF) traverse the membrane as a helical segment. Residues 234-253 (NYELVKAQLCEHYRTPQASF) are Mitochondrial intermembrane-facing. Residues 254–274 (TISFTAGAVSGAIAAVLTLPF) form a helical membrane-spanning segment. Residues 275–316 (DVVKTRRQIQLGEMEALGAVSMKKPSSTWNMMRNIWIDMGYK) lie on the Mitochondrial matrix side of the membrane. A helical transmembrane segment spans residues 317–337 (GLFAGFLPRVIKVAPACAVMI). Residues 338 to 359 (STYEFGKTFFQERNLHQARCGL) lie on the Mitochondrial intermembrane side of the membrane.

This sequence belongs to the mitochondrial carrier (TC 2.A.29) family. Post-translationally, cleaved and degraded by AFG3L2; degradation by AFG3L2 is regulated by the ability of SLC25A39 to bind iron-sulfur. In absence of mitochondrial glutathione, SLC25A39 binds iron-sulfur, preventing cleavage and degradation by AFG3L2. The presence of mitochondrial glutathione prevents iron-sulfur-binding to SLC25A39, promoting cleavage and degradation by AFG3L2.

It localises to the mitochondrion inner membrane. It carries out the reaction glutathione(in) = glutathione(out). The activity of SLC25A39 is regulated by levels of mitochondrial glutathione via its ability to bind [2Fe-2S] iron-sulfur cluster. Upon physiological levels of mitochondrial glutathione, glutathione prevents iron-sulfur-binding to SLC25A39 promoting cleavage and degradation by AFG3L2. Upon depletion of mitochondrial glutathione, SLC25A39 binds iron-sulfur, preventing cleavage and degradation by AFG3L2. Mitochondrial transporter required for glutathione import into mitochondria. Glutathione, which plays key roles in oxidative metabolism, is produced exclusively in the cytosol and is imported in many organelles. Mitochondrial glutathione is required for the activity and stability of proteins containing iron-sulfur clusters, as well as erythropoiesis. Involved in the early steps of heme biosynthesis. The chain is Mitochondrial glutathione transporter SLC25A39 (slc25a39) from Danio rerio (Zebrafish).